Reading from the N-terminus, the 176-residue chain is Peptide deformylase (176 aa).

Fe cation is bound by residues C92 and H134. E135 is an active-site residue. H138 contributes to the Fe cation binding site.

It belongs to the polypeptide deformylase family. The cofactor is Fe(2+).

The enzyme catalyses N-terminal N-formyl-L-methionyl-[peptide] + H2O = N-terminal L-methionyl-[peptide] + formate. Its function is as follows. Removes the formyl group from the N-terminal Met of newly synthesized proteins. Requires at least a dipeptide for an efficient rate of reaction. N-terminal L-methionine is a prerequisite for activity but the enzyme has broad specificity at other positions. This chain is Peptide deformylase, found in Acinetobacter baumannii (strain SDF).